The following is a 606-amino-acid chain: Pyruvate decarboxylase 2 (606 aa).

Aspartate 68 and histidine 155 together coordinate substrate. The segment at aspartate 433 to isoleucine 515 is thiamine pyrophosphate binding. 3 residues coordinate Mg(2+): aspartate 483, asparagine 510, and glycine 512. Glutamate 516 contributes to the substrate binding site.

It belongs to the TPP enzyme family. Homotetramer. The cofactor is a metal cation. It depends on thiamine diphosphate as a cofactor.

The enzyme catalyses a 2-oxocarboxylate + H(+) = an aldehyde + CO2. The polypeptide is Pyruvate decarboxylase 2 (PDC2) (Oryza sativa subsp. indica (Rice)).